Consider the following 132-residue polypeptide: UPF0060 membrane protein SG1469 (132 aa).

3 consecutive transmembrane segments (helical) span residues 5–25 (VLLY…PYCY), 32–52 (LLLI…VLYP), and 60–80 (AAYG…IDGI).

It belongs to the UPF0060 family.

It is found in the cell inner membrane. The sequence is that of UPF0060 membrane protein SG1469 from Sodalis glossinidius (strain morsitans).